Consider the following 327-residue polypeptide: MSHLAELVASAKAAISQASDVAALDNVRVEYLGKKGHLTLQMTTLRELPPEERPAAGAVINEAKEQVQQALNARKAELESAALNARLAAETIDVSLPGRRIENGGLHPVTRTIDRIESFFGELGFTVATGPEIEDDYHNFDALNIPGHHPARADHDTFWFDTTRLLRTQTSGVQIRTMKAQQPPIRIIAPGRVYRNDYDQTHTPMFHQMEGLIVDTNISFTNLKGTLHDFLRNFFEEDLQIRFRPSYFPFTEPSAEVDVMGKNGKWLEVLGCGMVHPNVLRNVGIDPEVYSGFAFGMGMERLTMLRYGVTDLRSFFENDLRFLKQFK.

Glu-252 contacts Mg(2+).

The protein belongs to the class-II aminoacyl-tRNA synthetase family. Phe-tRNA synthetase alpha subunit type 1 subfamily. In terms of assembly, tetramer of two alpha and two beta subunits. Mg(2+) serves as cofactor.

The protein localises to the cytoplasm. It carries out the reaction tRNA(Phe) + L-phenylalanine + ATP = L-phenylalanyl-tRNA(Phe) + AMP + diphosphate + H(+). This is Phenylalanine--tRNA ligase alpha subunit from Escherichia coli O139:H28 (strain E24377A / ETEC).